A 156-amino-acid chain; its full sequence is MKLNEIKDNEGATKNRKRLGRGIGSGSGKTAGRGVKGQKARSGVSINGFEGGQMPIYRRLPKRGFNNIFASEFVVVSLGRIQAAVDAKKLDASKTVDAAALKAAGVIRRVKDGVRVLADGELKAKVSLEVAGASKPAIEKIEKAGGSIKLLSAAAE.

The segment covering 1–13 (MKLNEIKDNEGAT) has biased composition (basic and acidic residues). The segment at 1–41 (MKLNEIKDNEGATKNRKRLGRGIGSGSGKTAGRGVKGQKAR) is disordered. Over residues 21 to 35 (RGIGSGSGKTAGRGV) the composition is skewed to gly residues.

Belongs to the universal ribosomal protein uL15 family. In terms of assembly, part of the 50S ribosomal subunit.

In terms of biological role, binds to the 23S rRNA. The polypeptide is Large ribosomal subunit protein uL15 (Sinorhizobium medicae (strain WSM419) (Ensifer medicae)).